The following is a 348-amino-acid chain: UPF0283 membrane protein PMI1371 (348 aa).

2 helical membrane-spanning segments follow: residues 69–89 and 99–119; these read LITVASTILGVSVIAQAGQWI and IALGAASAGGLIVIAGMGSVI.

The protein belongs to the UPF0283 family.

It localises to the cell inner membrane. The sequence is that of UPF0283 membrane protein PMI1371 from Proteus mirabilis (strain HI4320).